The sequence spans 157 residues: Protein GrpE (157 aa).

Residues 1-10 (MQEENQHPEQ) show a composition bias toward basic and acidic residues. Residues 1 to 21 (MQEENQHPEQDDISEAQDAGA) form a disordered region.

This sequence belongs to the GrpE family. In terms of assembly, homodimer.

The protein resides in the cytoplasm. Its function is as follows. Participates actively in the response to hyperosmotic and heat shock by preventing the aggregation of stress-denatured proteins, in association with DnaK and GrpE. It is the nucleotide exchange factor for DnaK and may function as a thermosensor. Unfolded proteins bind initially to DnaJ; upon interaction with the DnaJ-bound protein, DnaK hydrolyzes its bound ATP, resulting in the formation of a stable complex. GrpE releases ADP from DnaK; ATP binding to DnaK triggers the release of the substrate protein, thus completing the reaction cycle. Several rounds of ATP-dependent interactions between DnaJ, DnaK and GrpE are required for fully efficient folding. The sequence is that of Protein GrpE from Methylovorus sp. (strain SS1 / DSM 11726).